A 517-amino-acid chain; its full sequence is Crotonobetaine/carnitine--CoA ligase (517 aa).

It belongs to the ATP-dependent AMP-binding enzyme family.

The catalysed reaction is 4-(trimethylamino)butanoate + ATP + CoA = 4-(trimethylamino)butanoyl-CoA + AMP + diphosphate. It catalyses the reaction crotonobetaine + ATP + CoA = crotonobetainyl-CoA + AMP + diphosphate. It carries out the reaction (R)-carnitine + ATP + CoA = (R)-carnitinyl-CoA + AMP + diphosphate. It participates in amine and polyamine metabolism; carnitine metabolism. Catalyzes the transfer of CoA to carnitine, generating the initial carnitinyl-CoA needed for the CaiB reaction cycle. Also has activity toward crotonobetaine and gamma-butyrobetaine. This is Crotonobetaine/carnitine--CoA ligase from Salmonella arizonae (strain ATCC BAA-731 / CDC346-86 / RSK2980).